The chain runs to 221 residues: Toxin coregulated pilus biosynthesis protein P (221 aa).

Positions Arg-5 to Ile-109 form a DNA-binding region, ompR/PhoB-type. A helical transmembrane segment spans residues Val-143–Ser-163.

The protein resides in the cell membrane. Its function is as follows. Involved in TCP pilus biogenesis. The sequence is that of Toxin coregulated pilus biosynthesis protein P (tcpP) from Vibrio cholerae serotype O1 (strain ATCC 39315 / El Tor Inaba N16961).